Reading from the N-terminus, the 294-residue chain is Cytidine deaminase (294 aa).

2 CMP/dCMP-type deaminase domains span residues 48 to 168 (DEDA…FGPK) and 186 to 294 (LTGD…VLLG). 89–91 (NME) serves as a coordination point for substrate. Zn(2+) is bound at residue His-102. The Proton donor role is filled by Glu-104. Zn(2+) contacts are provided by Cys-129 and Cys-132.

It belongs to the cytidine and deoxycytidylate deaminase family. In terms of assembly, homodimer. It depends on Zn(2+) as a cofactor.

The enzyme catalyses cytidine + H2O + H(+) = uridine + NH4(+). The catalysed reaction is 2'-deoxycytidine + H2O + H(+) = 2'-deoxyuridine + NH4(+). Its function is as follows. This enzyme scavenges exogenous and endogenous cytidine and 2'-deoxycytidine for UMP synthesis. This is Cytidine deaminase from Salmonella schwarzengrund (strain CVM19633).